Consider the following 502-residue polypeptide: MTKSDETTATSLNAKTLKSFESTLPIPTYPREGVKQGIVHLGVGAFHRSHLAVFMHRLMQEHHLKDWSICGVGLMKADALMRDAMKAQDCLYTLVERGIKDTNAYIVGSITAYMYAPDDPRAVIEKMANPDTHIVSLTVTENGYYHSEATNSLMTDAPEIINDLNHPEKPDTLYGYLYEALLLRYKRGLTPFTIMSCDNMPQNGVTVKTMLVAFAKLKKDEKFAAWIEDKVTSPNSMVDRVTPRCTDKERKYVADTWGIKDQCPVVAEPFIQWVLEDNFSDGRPPWELVGVQVVKDVDSYELMKLRLLNGGHSAMGYLGYLAGYTYIHEVVNDPTINKYIRVLMREEVIPLLPKVPGVDFEEYTASVLERFSNPAIQDTVARICLMGSGKMPKYVLPSIYEQLRKPDGKYKLLAVCVAGWFRYLTGVDMNGKPFEIEDPMAPTLKAAAVKGGKDPHELLNIEVLFSPEIRDNKEFVAQLTHSLETVYDKGPIAAIKEILDQV.

Belongs to the mannitol dehydrogenase family.

The catalysed reaction is D-mannitol + NAD(+) = D-fructose + NADH + H(+). Catalyzes the NAD(H)-dependent interconversion of D-fructose and D-mannitol in the mannitol metabolic pathway. This is Mannitol dehydrogenase 2 from Saccharomyces cerevisiae (strain ATCC 204508 / S288c) (Baker's yeast).